Reading from the N-terminus, the 270-residue chain is Putative pyruvate, phosphate dikinase regulatory protein (270 aa).

153–160 (GVSRTSKT) is an ADP binding site.

The protein belongs to the pyruvate, phosphate/water dikinase regulatory protein family. PDRP subfamily.

The enzyme catalyses N(tele)-phospho-L-histidyl/L-threonyl-[pyruvate, phosphate dikinase] + ADP = N(tele)-phospho-L-histidyl/O-phospho-L-threonyl-[pyruvate, phosphate dikinase] + AMP + H(+). It catalyses the reaction N(tele)-phospho-L-histidyl/O-phospho-L-threonyl-[pyruvate, phosphate dikinase] + phosphate + H(+) = N(tele)-phospho-L-histidyl/L-threonyl-[pyruvate, phosphate dikinase] + diphosphate. Bifunctional serine/threonine kinase and phosphorylase involved in the regulation of the pyruvate, phosphate dikinase (PPDK) by catalyzing its phosphorylation/dephosphorylation. The polypeptide is Putative pyruvate, phosphate dikinase regulatory protein (Halalkalibacterium halodurans (strain ATCC BAA-125 / DSM 18197 / FERM 7344 / JCM 9153 / C-125) (Bacillus halodurans)).